A 131-amino-acid polypeptide reads, in one-letter code: Histone H2B.2 (131 aa).

Positions 1-19 (MSSAAEKKPASKAPAEKKP) are enriched in basic and acidic residues. The tract at residues 1-37 (MSSAAEKKPASKAPAEKKPAAKKTSTSVDGKKRSKVR) is disordered. Residues lysine 7 and lysine 8 each carry the N6-acetyllysine; alternate modification. Residues lysine 7 and lysine 8 each participate in a glycyl lysine isopeptide (Lys-Gly) (interchain with G-Cter in SUMO); alternate cross-link. The residue at position 11 (serine 11) is a Phosphoserine. The residue at position 12 (lysine 12) is an N6-acetyllysine. Residues lysine 17, lysine 18, lysine 22, and lysine 23 each carry the N6-acetyllysine; alternate modification. Residues lysine 17 and lysine 18 each participate in a glycyl lysine isopeptide (Lys-Gly) (interchain with G-Cter in SUMO); alternate cross-link. Lysine 22 carries the post-translational modification N6-butyryllysine; alternate. Lysine 23 bears the N6-methyllysine; alternate mark. An N6-succinyllysine modification is found at lysine 35. Lysine 38 bears the N6,N6-dimethyllysine mark. An N6-succinyllysine modification is found at lysine 47. A Glycyl lysine isopeptide (Lys-Gly) (interchain with G-Cter in ubiquitin) cross-link involves residue lysine 124.

This sequence belongs to the histone H2B family. The nucleosome is a histone octamer containing two molecules each of H2A, H2B, H3 and H4 assembled in one H3-H4 heterotetramer and two H2A-H2B heterodimers. The octamer wraps approximately 147 bp of DNA. Interacts with NAP1. Monoubiquitinated by the RAD6/UBC2-BRE1 complex to form H2BK123ub1. H2BK123ub1 gives a specific tag for epigenetic transcriptional activation and is also prerequisite for H3K4me and H3K79me formation. H2BK123ub1 also modulates the formation of double-strand breaks during meiosis and is a prerequisite for DNA-damage checkpoint activation. Deubiquitination is performed by UBP8 in presence of SGF11. Post-translationally, phosphorylated by STE20 to form H2BS10ph during progression through meiotic prophase. May be correlated with chromosome condensation. H2BS10ph is also formed after H(2)O(2) treatment, and is a step leading to apoptosis. In terms of processing, acetylated by GCN5, a component of the SAGA complex, to form H2BK11ac and H2BK16ac. H2BK16ac can also be formed by ESA1, a component of the NuA4 histone acetyltransferase (HAT) complex. Acetylation of N-terminal lysines and particularly formation of H2BK11acK16ac has a positive effect on transcription. Sumoylation to form H2BK6su or H2BK7su, and probably also H2BK16su or H2BK17su, occurs preferentially near the telomeres and represses gene transcription.

It is found in the nucleus. Its subcellular location is the chromosome. Core component of nucleosome. Nucleosomes wrap and compact DNA into chromatin, limiting DNA accessibility to the cellular machineries which require DNA as a template. Histones thereby play a central role in transcription regulation, DNA repair, DNA replication and chromosomal stability. DNA accessibility is regulated via a complex set of post-translational modifications of histones, also called histone code, and nucleosome remodeling. The polypeptide is Histone H2B.2 (HTB2) (Saccharomyces cerevisiae (strain ATCC 204508 / S288c) (Baker's yeast)).